Reading from the N-terminus, the 264-residue chain is Formamidopyrimidine-DNA glycosylase (264 aa).

The Schiff-base intermediate with DNA role is filled by P2. Catalysis depends on E3, which acts as the Proton donor. The active-site Proton donor; for beta-elimination activity is the K58. 3 residues coordinate DNA: H89, R107, and R144. The FPG-type zinc-finger motif lies at 229-263; that stretch reads RVYQRTGEPCLNCKTPIRRVIVTQRSSHFCPHCQK. The Proton donor; for delta-elimination activity role is filled by R253.

The protein belongs to the FPG family. As to quaternary structure, monomer. The cofactor is Zn(2+).

The enzyme catalyses Hydrolysis of DNA containing ring-opened 7-methylguanine residues, releasing 2,6-diamino-4-hydroxy-5-(N-methyl)formamidopyrimidine.. It catalyses the reaction 2'-deoxyribonucleotide-(2'-deoxyribose 5'-phosphate)-2'-deoxyribonucleotide-DNA = a 3'-end 2'-deoxyribonucleotide-(2,3-dehydro-2,3-deoxyribose 5'-phosphate)-DNA + a 5'-end 5'-phospho-2'-deoxyribonucleoside-DNA + H(+). In terms of biological role, involved in base excision repair of DNA damaged by oxidation or by mutagenic agents. Acts as a DNA glycosylase that recognizes and removes damaged bases. Has a preference for oxidized purines, such as 7,8-dihydro-8-oxoguanine (8-oxoG). Has AP (apurinic/apyrimidinic) lyase activity and introduces nicks in the DNA strand. Cleaves the DNA backbone by beta-delta elimination to generate a single-strand break at the site of the removed base with both 3'- and 5'-phosphates. The protein is Formamidopyrimidine-DNA glycosylase of Solibacter usitatus (strain Ellin6076).